Reading from the N-terminus, the 273-residue chain is Dermonecrotic toxin LhSicTox-alphaIA2aviii (273 aa).

Residue histidine 5 is part of the active site. The Mg(2+) site is built by glutamate 25 and aspartate 27. The Nucleophile role is filled by histidine 41. Intrachain disulfides connect cysteine 45–cysteine 51 and cysteine 47–cysteine 190. Mg(2+) is bound at residue aspartate 85.

The protein belongs to the arthropod phospholipase D family. Class II subfamily. Mg(2+) is required as a cofactor. In terms of tissue distribution, expressed by the venom gland.

The protein localises to the secreted. It catalyses the reaction an N-(acyl)-sphingosylphosphocholine = an N-(acyl)-sphingosyl-1,3-cyclic phosphate + choline. It carries out the reaction an N-(acyl)-sphingosylphosphoethanolamine = an N-(acyl)-sphingosyl-1,3-cyclic phosphate + ethanolamine. The enzyme catalyses a 1-acyl-sn-glycero-3-phosphocholine = a 1-acyl-sn-glycero-2,3-cyclic phosphate + choline. The catalysed reaction is a 1-acyl-sn-glycero-3-phosphoethanolamine = a 1-acyl-sn-glycero-2,3-cyclic phosphate + ethanolamine. Dermonecrotic toxins cleave the phosphodiester linkage between the phosphate and headgroup of certain phospholipids (sphingolipid and lysolipid substrates), forming an alcohol (often choline) and a cyclic phosphate. This toxin acts on sphingomyelin (SM). It may also act on ceramide phosphoethanolamine (CPE), lysophosphatidylcholine (LPC) and lysophosphatidylethanolamine (LPE), but not on lysophosphatidylserine (LPS), and lysophosphatidylglycerol (LPG). It acts by transphosphatidylation, releasing exclusively cyclic phosphate products as second products. Induces dermonecrosis, hemolysis, increased vascular permeability, edema, inflammatory response, and platelet aggregation. This chain is Dermonecrotic toxin LhSicTox-alphaIA2aviii, found in Loxosceles hirsuta (Recluse spider).